The following is a 286-amino-acid chain: Bifunctional protein FolD (286 aa).

NADP(+) contacts are provided by residues 165 to 167 (GRS) and Ser-190.

It belongs to the tetrahydrofolate dehydrogenase/cyclohydrolase family. As to quaternary structure, homodimer.

The catalysed reaction is (6R)-5,10-methylene-5,6,7,8-tetrahydrofolate + NADP(+) = (6R)-5,10-methenyltetrahydrofolate + NADPH. It catalyses the reaction (6R)-5,10-methenyltetrahydrofolate + H2O = (6R)-10-formyltetrahydrofolate + H(+). It functions in the pathway one-carbon metabolism; tetrahydrofolate interconversion. In terms of biological role, catalyzes the oxidation of 5,10-methylenetetrahydrofolate to 5,10-methenyltetrahydrofolate and then the hydrolysis of 5,10-methenyltetrahydrofolate to 10-formyltetrahydrofolate. The polypeptide is Bifunctional protein FolD (Staphylococcus epidermidis (strain ATCC 35984 / DSM 28319 / BCRC 17069 / CCUG 31568 / BM 3577 / RP62A)).